Here is a 507-residue protein sequence, read N- to C-terminus: Steroid (22S)-hydroxylase (507 aa).

A helical membrane pass occupies residues 12–32 (LLFFLPYILLALLTFYTTTVA). C444 contacts heme.

The protein belongs to the cytochrome P450 family. Heme serves as cofactor.

The protein localises to the membrane. The catalysed reaction is a C27-steroid + reduced [NADPH--hemoprotein reductase] + O2 = a (22S)-22-hydroxy C27-steroid + oxidized [NADPH--hemoprotein reductase] + H2O + H(+). The enzyme catalyses a C28-steroid + reduced [NADPH--hemoprotein reductase] + O2 = a (22S)-22-hydroxy C28-steroid + oxidized [NADPH--hemoprotein reductase] + H2O + H(+). It carries out the reaction campesterol + reduced [NADPH--hemoprotein reductase] + O2 = (22S)-22-hydroxycampesterol + oxidized [NADPH--hemoprotein reductase] + H2O + H(+). It catalyses the reaction campestanol + reduced [NADPH--hemoprotein reductase] + O2 = 6-deoxycathasterone + oxidized [NADPH--hemoprotein reductase] + H2O + H(+). It functions in the pathway plant hormone biosynthesis; brassinosteroid biosynthesis. In terms of biological role, involved in reduction steps of the biosynthesis of plant campesterol-derivative steroids, ending to castasterone (CS) but missing brassinolide (BL). Catalyzes the conversion of campesterol (CR) to (22S)-22-hydroxycampesterol (22-OHCR, 22-hydroxyCR) and of campestanol (CN) to 6-deoxycathasterone (6-deoxoCT). The protein is Steroid (22S)-hydroxylase of Brachypodium distachyon (Purple false brome).